We begin with the raw amino-acid sequence, 380 residues long: Spore coat protein B (380 aa).

Positions 224-364 (GPKGSYKKED…SSGKQKEDYS (141 aa)) are disordered. Residues 229–248 (YKKEDQKNEQNQEDNNDKDS) are compositionally biased toward basic and acidic residues. Composition is skewed to low complexity over residues 275-288 (SKSG…SSSK), 296-315 (SSDY…SSSK), and 338-356 (SSDY…IKSS).

The chain is Spore coat protein B (cotB) from Bacillus subtilis (strain 168).